Consider the following 479-residue polypeptide: mRNA export factor ICP27 homolog (479 aa).

The span at Met-1–Ser-15 shows a compositional bias: low complexity. Disordered regions lie at residues Met-1 to Val-77 and Lys-91 to Trp-210. Residues Thr-35 to Gly-44 are compositionally biased toward acidic residues. A compositionally biased stretch (basic and acidic residues) spans Glu-132–Gly-142. Zn(2+)-binding residues include Cys-354, His-445, Cys-449, and Cys-454. A CHC2-type zinc finger spans residues Cys-354 to Cys-454.

This sequence belongs to the HHV-1 ICP27 protein family. Interacts with host XPO1 and with the XPO1 export pathway components small GTPase RAN and nucleoporin NUP214. Interacts with host SPEN, OTT1 and OTT3. Interacts with host SRSF1, SRSF3, SRSF7 and SRPK1. Interacts with host DHX9; this interaction may have an inhibitory effect on virion production. Interacts (via N-terminus) with host NXF1; this interaction plays a role in mRNA export. In terms of processing, phosphorylated by cellular protein kinase CK2.

It localises to the host nucleus. The protein localises to the host cytoplasm. Promotes the nuclear export of a subset of early and late viral mRNAs by interacting with mRNAs and cellular export proteins. Additionally may prevent the establishment of cellular antiviral state, by acting as an alternative splicing factor for cellular RNAs such as STAT1, resulting in a STAT1 mRNA incapable of producing the STAT1alpha isoform. This Homo sapiens (Human) protein is mRNA export factor ICP27 homolog.